A 544-amino-acid polypeptide reads, in one-letter code: Secreted aspartic protease 9 (544 aa).

An N-terminal signal peptide occupies residues 1–17 (MRLNSVALLSLVATALA). The segment at 31-50 (GESKDDLSPEDDSNPRFVKR) is disordered. Residues 65–479 (YMATLKIGSN…DLDDYEVSLA (415 aa)) form the Peptidase A1 domain. 83 to 85 (DTG) provides a ligand contact to pepstatin A. Cysteines 98 and 195 form a disulfide. Threonine 167 is a catalytic residue. N-linked (GlcNAc...) asparagine glycans are attached at residues asparagine 212, asparagine 240, and asparagine 252. Residue aspartate 371 is part of the active site. Residue 371–375 (DTGST) participates in pepstatin A binding. An intrachain disulfide couples cysteine 406 to cysteine 441. N-linked (GlcNAc...) asparagine glycosylation is found at asparagine 422 and asparagine 499. Residues 500-520 (SSGSGTTSSSGTSTSTSTRHS) form a disordered region.

It belongs to the peptidase A1 family. In terms of assembly, monomer. In terms of processing, the GPI-anchor is attached to the protein in the endoplasmic reticulum and serves to target the protein to the cell surface. There, the glucosamine-inositol phospholipid moiety is cleaved off and the GPI-modified mannoprotein is covalently attached via its lipidless GPI glycan remnant to the 1,6-beta-glucan of the outer cell wall layer.

It is found in the cell membrane. Its subcellular location is the secreted. The protein resides in the cell wall. The catalysed reaction is Preferential cleavage at the carboxyl of hydrophobic amino acids, but fails to cleave 15-Leu-|-Tyr-16, 16-Tyr-|-Leu-17 and 24-Phe-|-Phe-25 of insulin B chain. Activates trypsinogen, and degrades keratin.. In terms of biological role, secreted aspartic peptidases (SAPs) are a group of ten acidic hydrolases considered as key virulence factors. These enzymes supply the fungus with nutrient amino acids as well as are able to degrade the selected host's proteins involved in the immune defense. Moreover, acts toward human hemoglobin though limited proteolysis to generate a variety of antimicrobial hemocidins, enabling to compete with the other microorganisms of the same physiological niche using the microbicidal peptides generated from the host protein. Plays a key role in defense against host by cleaving histatin-5 (Hst 5), a peptide from human saliva that carries out fungicidal activity. The cleavage rate decreases in an order of SAP2 &gt; SAP9 &gt; SAP3 &gt; SAP7 &gt; SAP4 &gt; SAP1 &gt; SAP8. The first cleavage occurs between residues 'Lys-17' and 'His-18' of Hst 5, giving DSHAKRHHGYKRKFHEK and HHSHRGY peptides. Simultaneously, the DSHAKRHHGYKRK peptide is also formed. Further fragmentation by SAP9 results in FHEK product. The sequence is that of Secreted aspartic protease 9 from Candida albicans (Yeast).